Consider the following 155-residue polypeptide: Small ribosomal subunit protein uS7 (155 aa).

It belongs to the universal ribosomal protein uS7 family. Part of the 30S ribosomal subunit. Contacts proteins S9 and S11.

Its function is as follows. One of the primary rRNA binding proteins, it binds directly to 16S rRNA where it nucleates assembly of the head domain of the 30S subunit. Is located at the subunit interface close to the decoding center, probably blocks exit of the E-site tRNA. The polypeptide is Small ribosomal subunit protein uS7 (Pelodictyon phaeoclathratiforme (strain DSM 5477 / BU-1)).